A 382-amino-acid chain; its full sequence is MSTYTRPVMLLLSGLLLLTLAIAVLNTLVPLWLAQEHMSTWQVGVVSSSYFTGNLVGTLLTGYVIKRIGFNRSYYLASFIFAAGCAGLGLMIGFWSWLAWRFVAGVGCAMIWVVVESALMCSGTSRNRGRLLAAYMMVYYVGTFLGQLLVSKVSTELMSVLPWVTGLTLAGILPLLFTRVLNQQAENHDSTSITSMLKLRQARLGVNGCIISGIVLGSLYGLMPLYLNHKGVSNASIGFWMAVLVSAGILGQWPIGRLADKFGRLLVLRVQVFVVILGSIAMLSQAAMAPALFILGAAGFTLYPVAMAWACEKVEHHQLVAMNQALLLSYTVGSLLGPSFTAMLMQNFSDNLLFIMIASVSFIYLLMLLRNAGHTPKPVAHV.

12 consecutive transmembrane segments (helical) span residues 14-34 (GLLL…LWLA), 45-65 (VVSS…GYVI), 79-99 (FIFA…SWLA), 102-122 (FVAG…LMCS), 131-151 (LLAA…LLVS), 157-177 (LMSV…PLLF), 204-224 (LGVN…GLMP), 235-255 (ASIG…QWPI), 270-290 (VQVF…AMAP), 291-311 (ALFI…AWAC), 325-345 (ALLL…AMLM), and 348-368 (FSDN…LLML).

This sequence belongs to the major facilitator superfamily. YcaD (TC 2.A.1.26) family.

It localises to the cell inner membrane. This is an uncharacterized protein from Shigella dysenteriae serotype 1 (strain Sd197).